A 109-amino-acid chain; its full sequence is MAHSVLDSMDPSSSIRVEHDRKRRQFSVRLNGCHDRAVLLYEYVGKKTVDLQHTEVPDAFRGRGIAKHLAKAAMDFVVEEDLKAHLTCWYIQKYVKENPLPQYLERLQP.

In terms of domain architecture, N-acetyltransferase spans 18 to 108; sequence EHDRKRRQFS…PLPQYLERLQ (91 aa).

This sequence belongs to the NATD1 family.

This Xenopus tropicalis (Western clawed frog) protein is Protein NATD1 (natd1).